An 881-amino-acid polypeptide reads, in one-letter code: Alanine--tRNA ligase (881 aa).

Histidine 566, histidine 570, cysteine 668, and histidine 672 together coordinate Zn(2+).

It belongs to the class-II aminoacyl-tRNA synthetase family. Zn(2+) serves as cofactor.

Its subcellular location is the cytoplasm. The enzyme catalyses tRNA(Ala) + L-alanine + ATP = L-alanyl-tRNA(Ala) + AMP + diphosphate. Functionally, catalyzes the attachment of alanine to tRNA(Ala) in a two-step reaction: alanine is first activated by ATP to form Ala-AMP and then transferred to the acceptor end of tRNA(Ala). Also edits incorrectly charged Ser-tRNA(Ala) and Gly-tRNA(Ala) via its editing domain. This is Alanine--tRNA ligase from Frankia casuarinae (strain DSM 45818 / CECT 9043 / HFP020203 / CcI3).